An 88-amino-acid chain; its full sequence is Cell division topological specificity factor (88 aa).

It belongs to the MinE family.

Prevents the cell division inhibition by proteins MinC and MinD at internal division sites while permitting inhibition at polar sites. This ensures cell division at the proper site by restricting the formation of a division septum at the midpoint of the long axis of the cell. This is Cell division topological specificity factor from Herminiimonas arsenicoxydans.